The following is a 275-amino-acid chain: Phenylalanine-4-hydroxylase (275 aa).

Fe cation-binding residues include His-135, His-140, and Glu-181.

Belongs to the biopterin-dependent aromatic amino acid hydroxylase family. It depends on Fe(2+) as a cofactor.

It carries out the reaction (6R)-L-erythro-5,6,7,8-tetrahydrobiopterin + L-phenylalanine + O2 = (4aS,6R)-4a-hydroxy-L-erythro-5,6,7,8-tetrahydrobiopterin + L-tyrosine. It participates in amino-acid degradation; L-phenylalanine degradation; acetoacetate and fumarate from L-phenylalanine: step 1/6. This Mesorhizobium japonicum (strain LMG 29417 / CECT 9101 / MAFF 303099) (Mesorhizobium loti (strain MAFF 303099)) protein is Phenylalanine-4-hydroxylase (phhA).